We begin with the raw amino-acid sequence, 128 residues long: Glycine cleavage system H protein (128 aa).

The Lipoyl-binding domain maps to 25-107 (TITVGITHHA…YGAGWFFKLK (83 aa)). K66 is subject to N6-lipoyllysine.

It belongs to the GcvH family. In terms of assembly, the glycine cleavage system is composed of four proteins: P, T, L and H. (R)-lipoate is required as a cofactor.

In terms of biological role, the glycine cleavage system catalyzes the degradation of glycine. The H protein shuttles the methylamine group of glycine from the P protein to the T protein. This Neisseria meningitidis serogroup B (strain ATCC BAA-335 / MC58) protein is Glycine cleavage system H protein.